The following is a 552-amino-acid chain: Phosphoglucomutase (552 aa).

S143 functions as the Phosphoserine intermediate in the catalytic mechanism. Positions 143, 295, 297, and 299 each coordinate Mg(2+).

It belongs to the phosphohexose mutase family. It depends on Mg(2+) as a cofactor.

It catalyses the reaction alpha-D-glucose 1-phosphate = alpha-D-glucose 6-phosphate. Its pathway is glycolipid metabolism; diglucosyl-diacylglycerol biosynthesis. Catalyzes the interconversion between glucose-6-phosphate and alpha-glucose-1-phosphate. This is the first step in the biosynthesis of diglucosyl-diacylglycerol (Glc2-DAG), i.e. the predominant glycolipid found in the S.aureus membrane, which is also used as a membrane anchor for lipoteichoic acid (LTA). This is Phosphoglucomutase (pgcA) from Staphylococcus aureus (strain MSSA476).